A 335-amino-acid polypeptide reads, in one-letter code: Basic endochitinase B (335 aa).

A signal peptide spans 1–33 (MPPQKENHRTLNKMKTNLFLFLIFSLLLSLSSA). Positions 34–75 (EQCGRQAGGALCPNGLCCSEFGWCGNTEPYCKQPGCQSQCTP) constitute a Chitin-binding type-1 domain. Disulfide bonds link Cys36–Cys51, Cys45–Cys57, Cys50–Cys64, Cys69–Cys73, Cys107–Cys169, Cys181–Cys189, and Cys288–Cys320. The active-site Proton donor is Glu151. Positions 329-335 (GLLEAAI) are cleaved as a propeptide — removed in mature form. Residues 329–335 (GLLEAAI) carry the Vacuolar targeting signal motif.

The protein belongs to the glycosyl hydrolase 19 family. Chitinase class I subfamily. In terms of tissue distribution, high constitutive level in roots with lower levels in leaves and flowering shoots.

The protein resides in the vacuole. The catalysed reaction is Random endo-hydrolysis of N-acetyl-beta-D-glucosaminide (1-&gt;4)-beta-linkages in chitin and chitodextrins.. Its function is as follows. Defense against chitin-containing fungal pathogens. Seems particularly implicated in resistance to jasmonate-inducing pathogens such as A.brassicicola. In vitro antifungal activity against T.reesei, but not against A.solani, F.oxysporum, S.sclerotiorum, G.graminis and P.megasperma. This Arabidopsis thaliana (Mouse-ear cress) protein is Basic endochitinase B (CHI-B).